Reading from the N-terminus, the 556-residue chain is Formate--tetrahydrofolate ligase (556 aa).

65–72 lines the ATP pocket; that stretch reads TPAGEGKS.

This sequence belongs to the formate--tetrahydrofolate ligase family.

The enzyme catalyses (6S)-5,6,7,8-tetrahydrofolate + formate + ATP = (6R)-10-formyltetrahydrofolate + ADP + phosphate. The protein operates within one-carbon metabolism; tetrahydrofolate interconversion. The protein is Formate--tetrahydrofolate ligase of Streptococcus pneumoniae serotype 4 (strain ATCC BAA-334 / TIGR4).